The sequence spans 227 residues: Ion-translocating oxidoreductase complex subunit E (227 aa).

5 consecutive transmembrane segments (helical) span residues Leu-57–Phe-77, Ile-89–Ala-109, Pro-111–Gly-131, Ala-146–Ile-166, and Gly-200–Val-220.

It belongs to the NqrDE/RnfAE family. The complex is composed of six subunits: RnfA, RnfB, RnfC, RnfD, RnfE and RnfG.

It localises to the cell inner membrane. Part of a membrane-bound complex that couples electron transfer with translocation of ions across the membrane. In Haemophilus ducreyi (strain 35000HP / ATCC 700724), this protein is Ion-translocating oxidoreductase complex subunit E.